The sequence spans 36 residues: Glucagon-1 (36 aa).

It belongs to the glucagon family.

It is found in the secreted. Functionally, promotes hydrolysis of glycogen and lipids, and raises the blood sugar level. This Oreochromis niloticus (Nile tilapia) protein is Glucagon-1 (gcg1).